The chain runs to 182 residues: MSENEVKDPRIDGIKTKIRVVPDFPKKGIMFQDITTLLLDPKAFKDTIDLFVERYRDMNISVVAGIEARGFIFGSPIALAIGAKFVPLRKPKKLPGQIIFEEYELEYGSDRLEMHVEAVDSGDRALVVDDLIATGGTLCAAMNLLKRVGAEVIECACVIELPELKGRERLEGKPLYVLVEYR.

Belongs to the purine/pyrimidine phosphoribosyltransferase family. As to quaternary structure, homodimer.

Its subcellular location is the cytoplasm. It catalyses the reaction AMP + diphosphate = 5-phospho-alpha-D-ribose 1-diphosphate + adenine. It participates in purine metabolism; AMP biosynthesis via salvage pathway; AMP from adenine: step 1/1. Functionally, catalyzes a salvage reaction resulting in the formation of AMP, that is energically less costly than de novo synthesis. May contribute to the recycling of adenine into adenylate nucleotides and the inactivation of cytokinins by phosphoribosylation. Possesses low activity toward adenine, but can efficiently convert cytokinins from free bases (active form) to the corresponding nucleotides (inactive form). In Arabidopsis thaliana (Mouse-ear cress), this protein is Adenine phosphoribosyltransferase 4 (APT4).